The sequence spans 483 residues: MESSLRIVAITNCPAGIAHTYMVAEALEQKARSLGHTIKVETQGSSGVENRLSSEEIAAADYVILATGRGLSGDDRARFAGKKVYEIAISQALKNIDQIFSELPTNSQLFAADSGVKLGKQEVQSGSVMSHLMAGVSAALPFVIGGGILVALANMLVQFGLPYTDMSKGAPSFTWVVESIGYLGFTFMIPIMGAYIASSIADKPAFAPAFLVCYLANDKALLGTQSGAGFLGAVVLGLAIGYFVFWFRKVRLGKALQPLLGSMLIPFVTLLVFGVLTYYVIGPVMSDLMGGLLHFLNTIPPSMKFAAAFLVGAMLAFDMGGPINKTAWFFCFSLLEKHIYDWYAIVGVVALMPPVAAGLATFIAPKLFTRQEKEAASSAIVVGATVATEPAIPYALAAPLPMITANTLAGGITGVLVIAFGIKRLAPGLGIFDPLIGLMSPVGSFYLVLAIGLALNISFIIVLKGLWLRRKAKAAQQELVHEH.

The PTS EIIB type-2 domain maps to 1 to 105; that stretch reads MESSLRIVAI…IDQIFSELPT (105 aa). The active-site Phosphocysteine intermediate; for EIIB activity is the cysteine 13. Cysteine 13 carries the phosphocysteine; by EIIA modification. The PTS EIIC type-2 domain occupies 128-475; it reads VMSHLMAGVS…LWLRRKAKAA (348 aa). The next 10 helical transmembrane spans lie at 132–152, 180–200, 204–224, 227–247, 264–284, 303–323, 344–364, 380–400, 402–422, and 442–462; these read LMAG…LVAL, IGYL…ASSI, PAFA…LLGT, GAGF…VFWF, LIPF…IGPV, MKFA…GGPI, AIVG…TFIA, IVVG…AAPL, MITA…AFGI, and VGSF…FIIV.

The protein localises to the cell inner membrane. It catalyses the reaction D-fructose(out) + N(pros)-phospho-L-histidyl-[protein] = D-fructose 1-phosphate(in) + L-histidyl-[protein]. Its function is as follows. The phosphoenolpyruvate-dependent sugar phosphotransferase system (sugar PTS), a major carbohydrate active transport system, catalyzes the phosphorylation of incoming sugar substrates concomitantly with their translocation across the cell membrane. The enzyme II FrvAB PTS system is involved in fructose transport. This chain is Fructose-like PTS system EIIBC component, found in Escherichia coli (strain K12).